The chain runs to 528 residues: Sensory rhodopsin I transducer (528 aa).

Helical transmembrane passes span 11–31 and 35–55; these read GAKLGVGYIATATLLITVGVV and VASTVVAGIAGLLTLGSINAA. 2 HAMP domains span residues 55-107 and 142-195; these read AETV…DRLS and TAYQ…ETIE. The Methyl-accepting transducer domain occupies 214–455; sequence TSRRVQQEVD…ATADSIADVT (242 aa). Glutamate 259 is modified (glutamate methyl ester (Glu)).

The protein belongs to the methyl-accepting chemotaxis (MCP) protein family. In terms of assembly, interacts with Sop1.

Its subcellular location is the cell membrane. Functionally, transduces signals from the phototaxis receptor sensory rhodopsin I (Sop1). This Haloarcula marismortui (strain ATCC 43049 / DSM 3752 / JCM 8966 / VKM B-1809) (Halobacterium marismortui) protein is Sensory rhodopsin I transducer (htr1).